The following is a 106-amino-acid chain: MLYAIIEADGKQMWIEPGKYYDVNYIPGEPGDYIQFNKVLVLRQENDIYVGKPCIQSIIIKAKILKHLKSKKITVFKIKPKKNSRKKQGHRQKLTRLLIEEFYNQI.

The protein belongs to the bacterial ribosomal protein bL21 family. In terms of assembly, part of the 50S ribosomal subunit.

Its subcellular location is the plastid. The protein resides in the chloroplast. In terms of biological role, this protein binds to 23S rRNA. This is Large ribosomal subunit protein bL21c from Gracilaria tenuistipitata var. liui (Red alga).